Reading from the N-terminus, the 265-residue chain is (-)-isopiperitenol/(-)-carveol dehydrogenase, mitochondrial (265 aa).

A mitochondrion-targeting transit peptide spans 1 to 30 (MASVKKLAGKVAIVTGGASGIGEVTARLFA). 13–38 (IVTGGASGIGEVTARLFAERGARAVV) lines the NAD(+) pocket. Serine 147 is a binding site for substrate. The active-site Proton acceptor is the tyrosine 160.

It belongs to the short-chain dehydrogenases/reductases (SDR) family. Homodimer and homotetramer. In terms of tissue distribution, peltate glandular trichomes.

It is found in the mitochondrion. The catalysed reaction is (1S,6R)-isopiperitenol + NAD(+) = (6R)-isopiperitenone + NADH + H(+). It catalyses the reaction (1S,5R)-carveol + NADP(+) = (R)-carvone + NADPH + H(+). In terms of biological role, involved in the biosynthesis of menthol and related monoterpenes in leaves. Can use (-)-trans-carveol and, with a lower relative velocity, (-)-trans-isopiperitenol, (+)-neomenthol, (+)-neoisomenthol and (-)-cis-isopiperitenol as substrates, but not (-)-cis-carvenol, (-)-menthol, (+)-isomenthol, 7-hydroxy-limonene, (-)-isopiperitenone or (-)-carvone. The polypeptide is (-)-isopiperitenol/(-)-carveol dehydrogenase, mitochondrial (Mentha piperita (Peppermint)).